Reading from the N-terminus, the 272-residue chain is METYAVFGNPIAHSKSPFIHQQFAQQLNIEHPYGRVLAPINDFINTLNAFFSAGGKGANVTVPFKEEAFARADELTERAALAGAVNTLKRLEDGRLQGDNTDGIGLLSDLERLSFIRPGLRILLIGAGGASRGVLLPLLSLDCAVTITNRTVSRAEELAKLFAHTGSIQALGMDELEGHEFDLIINATSSGISGDIPAIPSSLIHLGIYCYDMFYQKGKTPFLAWCEQRGSKRNVDGLGMLVAQAAHAFLLWHGVLPDVEPVIKQLQEELSA.

Shikimate contacts are provided by residues 14-16 (SKS) and T61. K65 acts as the Proton acceptor in catalysis. Residue E77 participates in NADP(+) binding. Residues N86 and D102 each coordinate shikimate. NADP(+) is bound by residues 126-130 (GAGGA), 149-154 (NRTVSR), and M213. Y215 is a binding site for shikimate. G237 serves as a coordination point for NADP(+).

The protein belongs to the shikimate dehydrogenase family. As to quaternary structure, homodimer.

It carries out the reaction shikimate + NADP(+) = 3-dehydroshikimate + NADPH + H(+). It functions in the pathway metabolic intermediate biosynthesis; chorismate biosynthesis; chorismate from D-erythrose 4-phosphate and phosphoenolpyruvate: step 4/7. In terms of biological role, involved in the biosynthesis of the chorismate, which leads to the biosynthesis of aromatic amino acids. Catalyzes the reversible NADPH linked reduction of 3-dehydroshikimate (DHSA) to yield shikimate (SA). This Shigella boydii serotype 18 (strain CDC 3083-94 / BS512) protein is Shikimate dehydrogenase (NADP(+)).